The following is a 1059-amino-acid chain: Pleckstrin homology domain-containing family M member 1 (1059 aa).

The RUN domain maps to 40–182 (TSEDGDANTM…LSFELSYKSA (143 aa)). Position 218 is a phosphoserine (serine 218). Disordered regions lie at residues 218 to 244 (SLDS…RRDR), 272 to 334 (LQEN…TPMF), and 354 to 411 (SEEP…DQGS). 2 stretches are compositionally biased toward polar residues: residues 313-334 (SKAQ…TPMF) and 392-401 (GSTSDQQPSS). Phosphoserine is present on residues serine 430, serine 433, and serine 488. Residues 536–627 (GLMKLGTVAR…WLDRVREALQ (92 aa)) enclose the PH 1 domain. The LIR signature appears at 634-640 (EEEWVNI). Positions 657 to 1059 (LPPYSALLPE…RKYQEQNTVS (403 aa)) are interaction with RAB7A. One can recognise a PH 2 domain in the interval 686–780 (DAIKESLLYL…WRDLVRKVLA (95 aa)). The Phorbol-ester/DAG-type zinc-finger motif lies at 989 to 1043 (QHVYHCDLCTQRGFICQICHHQDIIFPFEFDTTVRCAECRTVFHQSCQAVVRKGC).

Interacts (via N- and C-terminus) with RAB7A (GTP-bound form). Simultaneously interacts with RAB7A and ARL8B; bringing about clustering and fusion of late endosomes and lysosomes. Interacts (via RUN domain) with ARL8B (GTP-bound form); the interaction is required for PLEKHM1 localization to lysosomes and for ARL8B function in delivery and degradation of endocytic and autophagic cargo in lysosomes. PLEKHM1 and PLEKHM2 compete for interaction with ARL8B. Interacts with ARL8A; the interaction is weaker than with ARL8B. Interacts with VPS41, VPS11, VPS18, VPS33A and VPS39; indicative for an association with the HOPS complex; the interactions with, at least, VPS41, VPS11, VPS18 and VPS33A require ARL8B. Interacts with GABARAP, GABARAPL, GABARAPL2, MAP1LC3A, MAP1LC3B and MAP1LC3C. Interacts with PAFAH1B. Interacts (via N- and C-terminus) with NDEL1. Interacts (via C-terminus) with MAP3K7. Interacts (via N- and C-terminus) with FAM98A. Interacts (via C-terminus) with DEF8; this interaction is weak but increased in a RAB7A-dependent manner. May interact with sialyl-lex-positive protein. Expressed in testis, skeletal muscle, lung, liver, spleen, brain, heart, kidney and bone. Weakly expressed in monocytes (at protein level).

The protein resides in the autolysosome membrane. It localises to the endosome membrane. The protein localises to the late endosome membrane. Its subcellular location is the lysosome membrane. Its function is as follows. Acts as a multivalent adapter protein that regulates Rab7-dependent and HOPS complex-dependent fusion events in the endolysosomal system and couples autophagic and the endocytic trafficking pathways. Acts as a dual effector of RAB7A and ARL8B that simultaneously binds these GTPases, bringing about clustering and fusion of late endosomes and lysosomes. Required for late stages of endolysosomal maturation, facilitating both endocytosis-mediated degradation of growth factor receptors and autophagosome clearance. Interaction with Arl8b is a crucial factor in the terminal maturation of autophagosomes and to mediate autophagosome-lysosome fusion. Positively regulates lysosome peripheral distribution and ruffled border formation in osteoclasts. May be involved in negative regulation of endocytic transport from early endosome to late endosome/lysosome implicating its association with Rab7. May have a role in sialyl-lex-mediated transduction of apoptotic signals. Involved in bone resorption. This is Pleckstrin homology domain-containing family M member 1 from Rattus norvegicus (Rat).